Here is a 105-residue protein sequence, read N- to C-terminus: UPF0145 protein (105 aa).

This sequence belongs to the UPF0145 family.

The chain is UPF0145 protein from Enterococcus faecalis (Streptococcus faecalis).